The sequence spans 1099 residues: Solute carrier family 12 member 1 (1099 aa).

Residues 1 to 177 (MSLNNSSNVF…EDDQAGVVKF (177 aa)) are Cytoplasmic-facing. Residues 20-23 (RFQV) carry the RFXV motif motif. The segment at 31 to 53 (ESSAAADDNTDPPHYEETSFGDE) is disordered. Ser61 is modified (phosphoserine). Ser91 carries the post-translational modification Phosphoserine; by OXSR1 and STK39. The residue at position 95 (Thr95) is a Phosphothreonine. Phosphothreonine; by OXSR1 and STK39 occurs at positions 100 and 105. Thr118 carries the post-translational modification Phosphothreonine. Ser120 carries the phosphoserine modification. Residue Ser130 is modified to Phosphoserine; by AMPK. The residue at position 148 (Ser148) is a Phosphoserine. The helical transmembrane segment at 178-198 (GWVKGVLVRCMLNIWGVMLFI) threads the bilayer. At 199 to 201 (RLS) the chain is on the extracellular side. A helical membrane pass occupies residues 202–222 (WIVGEAGIGLGVLIILLSTMV). Residues 223-259 (TSITGLSTSAIATNGFVRGGGAYYLISRSLGPEFGGS) lie on the Cytoplasmic side of the membrane. A helical membrane pass occupies residues 260 to 280 (IGLIFAFANAVAVAMYVVGFA). Over 281–302 (ETVVDLLKESDSMMVDPTNDIR) the chain is Extracellular. The helical transmembrane segment at 303–323 (IIGSITVVILLGISVAGMEWE) threads the bilayer. Topologically, residues 324 to 327 (AKAQ) are cytoplasmic. A helical transmembrane segment spans residues 328-348 (VILLVILLIAIANFFIGTVIP). The Extracellular portion of the chain corresponds to 349-379 (SNNEKKSRGFFNYQASIFAENFGPRFTKGEG). The chain crosses the membrane as a helical span at residues 380-400 (FFSVFAIFFPAATGILAGANI). The Cytoplasmic portion of the chain corresponds to 401–417 (SGDLEDPQDAIPRGTML). The chain crosses the membrane as a helical span at residues 418–438 (AIFITTVAYLGVAICVGACVV). Topologically, residues 439 to 550 (RDATGNMNDT…NNEPLRGYIL (112 aa)) are extracellular. N-linked (GlcNAc...) asparagine glycosylation is found at Asn446 and Asn456. The next 2 membrane-spanning stretches (helical) occupy residues 551 to 571 (TFLI…APII) and 572 to 592 (SNFF…ASYA). The Extracellular portion of the chain corresponds to 593–609 (KSPGWRPAYGIYNMWVS). The chain crosses the membrane as a helical span at residues 610 to 630 (LFGAVLCCAVMFVINWWAAVI). Topologically, residues 631-1099 (TYVIEFFLYV…NHKNVLTFYS (469 aa)) are cytoplasmic.

Belongs to the SLC12A transporter family. In terms of assembly, when phosphorylated, interacts with PPP3CB. In terms of processing, phosphorylated at Ser-91, Thr-100 and Thr-105 by OXSR1/OSR1 and STK39/SPAK downstream of WNK kinases (WNK1, WNK2, WNK3 or WNK4), promoting its activity. As to expression, kidney; localizes to the thick ascending limbs (at protein level).

Its subcellular location is the apical cell membrane. It catalyses the reaction K(+)(out) + 2 chloride(out) + Na(+)(out) = K(+)(in) + 2 chloride(in) + Na(+)(in). Activated following phosphorylation by OXSR1/OSR1 and STK39/SPAK downstream of WNK kinases (WNK1, WNK2, WNK3 or WNK4). In terms of biological role, renal sodium, potassium and chloride ion cotransporter that mediates the transepithelial NaCl reabsorption in the thick ascending limb and plays an essential role in the urinary concentration and volume regulation. Electrically silent transporter system. The protein is Solute carrier family 12 member 1 (SLC12A1) of Homo sapiens (Human).